The chain runs to 1271 residues: ATP-dependent helicase/nuclease subunit A (1271 aa).

The region spanning 3-476 is the UvrD-like helicase ATP-binding domain; sequence TKWTEEQELA…IMLYKNFRSR (474 aa). 24 to 31 provides a ligand contact to ATP; sequence AAAGSGKT. Residues 528-824 enclose the UvrD-like helicase C-terminal domain; that stretch reads IENLKVAGDI…RIMSIHKSKG (297 aa).

This sequence belongs to the helicase family. AddA subfamily. Heterodimer of AddA and AddB/RexB. It depends on Mg(2+) as a cofactor.

The catalysed reaction is Couples ATP hydrolysis with the unwinding of duplex DNA by translocating in the 3'-5' direction.. The enzyme catalyses ATP + H2O = ADP + phosphate + H(+). Functionally, the heterodimer acts as both an ATP-dependent DNA helicase and an ATP-dependent, dual-direction single-stranded exonuclease. Recognizes the chi site generating a DNA molecule suitable for the initiation of homologous recombination. The AddA nuclease domain is required for chi fragment generation; this subunit has the helicase and 3' -&gt; 5' nuclease activities. The sequence is that of ATP-dependent helicase/nuclease subunit A from Clostridium perfringens (strain ATCC 13124 / DSM 756 / JCM 1290 / NCIMB 6125 / NCTC 8237 / Type A).